Consider the following 669-residue polypeptide: Epithelial sodium channel subunit alpha (669 aa).

The interval 1–43 is disordered; sequence MEGNKLEEQDSSPPQSTPGLMKGNKREEQGLGPEPAAPQQPTA. The Cytoplasmic segment spans residues 1-85; the sequence is MEGNKLEEQD…CSQHNRMKTA (85 aa). Residues 33 to 42 are compositionally biased toward low complexity; the sequence is PEPAAPQQPT. The chain crosses the membrane as a helical span at residues 86 to 106; sequence FWAVLWLCTFGMMYWQFGLLF. Topologically, residues 107–562 are extracellular; the sequence is GEYFSYPVSL…SQWSLWFGSS (456 aa). Cystine bridges form between Cys-133–Cys-305, Cys-229–Cys-236, Cys-282–Cys-289, Cys-394–Cys-479, Cys-416–Cys-456, Cys-416–Cys-475, Cys-420–Cys-471, Cys-429–Cys-456, Cys-429–Cys-479, and Cys-431–Cys-445. The interval 175-243 is gating release of inhibition by proteolysis (GRIP); protease-sensitive region that is responsible for the proteolytic activation of the channel; that stretch reads RSRRDLRGTL…SDCFYQTYSS (69 aa). A helical membrane pass occupies residues 563-583; the sequence is VLSVVEMAELVFDLLVIMFLM. The Cytoplasmic portion of the chain corresponds to 584–669; it reads LLRRFRSRYW…SSSTCPLGGP (86 aa). Residues 620 to 669 form a disordered region; sequence HPMSLSLSQPGPAPSPALTAPPPAYATLGPRPSPGGSAGASSSTCPLGGP. The segment covering 630-643 has biased composition (pro residues); sequence GPAPSPALTAPPPA. The PY motif; recruits WW domain-containing proteins and is thereby required for ubiquitination and inhibition of the channel by NEDD4 and NEDD4L signature appears at 640–644; the sequence is PPPAY.

Belongs to the amiloride-sensitive sodium channel (TC 1.A.6) family. SCNN1A subfamily. As to quaternary structure, heterotrimer; containing an alpha/SCNN1A, a beta/SCNN1B and a gamma/SCNN1G subunit. Interacts with WWP1 (via WW domains). Interacts with WWP2 (via WW domains); inhibits the channel. Interacts with BPIFA1; the interaction is indirect via SCNN1B and inhibits the proteolytic processing of SCNN1A and SCNN1G and the activation of ENaC. Interacts with the full-length immature form of PCSK9 (pro-PCSK9); inhibits ENaC by promoting its proteasomal degradation. Ubiquitinated. Can be ubiquitinated at multiple sites and undergo monoubiquitination and polyubiquitination. Ubiquitination by NEDD4 or NEDD4L inhibits the ENaC channel through endocytosis, intracellular retention and degradation of its individual subunits. In terms of processing, ENaC is activated through the proteolytic maturation of its subunits. Furin cleaves the SCNN1A subunit, which results in a stepwise increase in the open probability of the channel due to the release of an inhibitory tract. BPIFA1, which is recruited by the SCNN1B subunit, prevents the proteolytic activation of ENaC. Post-translationally, N-glycosylated. Expressed in the female reproductive tract, from the fimbrial end of the fallopian tube to the endometrium (at protein level). Expressed in kidney (at protein level). In the respiratory tract, expressed in the bronchial epithelium (at protein level). Highly expressed in lung. Detected at intermediate levels in pancreas and liver, and at low levels in heart and placenta. in skin, expressed in keratinocytes, melanocytes and Merkel cells of the epidermal sub-layers, stratum basale, stratum spinosum and stratum granulosum (at protein level). Expressed in the outer root sheath of the hair follicles (at protein level). Detected in both peripheral and central cells of the sebaceous gland (at protein level). Expressed by eccrine sweat glands (at protein level). In skin, also expressed by arrector pili muscle cells and intradermal adipocytes. Isoform 1 and isoform 2 predominate in all tissues. As to expression, detected in lung and heart.

It is found in the apical cell membrane. It localises to the cell projection. Its subcellular location is the cilium. The protein localises to the cytoplasmic granule. The protein resides in the cytoplasm. It is found in the cytoplasmic vesicle. It localises to the secretory vesicle. Its subcellular location is the acrosome. The protein localises to the flagellum. The catalysed reaction is Na(+)(in) = Na(+)(out). Originally identified and characterized by its inhibition by the diuretic drug amiloride. Inhibited by phenamil. This is one of the three pore-forming subunits of the heterotrimeric epithelial sodium channel (ENaC), a critical regulator of sodium balance and fluid homeostasis. ENaC operates in epithelial tissues, where it mediates the electrodiffusion of sodium ions from extracellular fluid through the apical membrane of cells, with water following osmotically. It plays a key role in maintaining sodium homeostasis through electrogenic sodium reabsorption in the kidneys. Additionally, ENaC is essential for airway surface liquid homeostasis, which is crucial for proper mucus clearance. In terms of biological role, not functional. The chain is Epithelial sodium channel subunit alpha from Homo sapiens (Human).